A 305-amino-acid polypeptide reads, in one-letter code: NAD kinase 2 (305 aa).

Aspartate 78 serves as the catalytic Proton acceptor. Residues 78 to 79 (DG), 152 to 153 (NE), aspartate 182, 193 to 198 (TAYSLS), and asparagine 251 contribute to the NAD(+) site.

It belongs to the NAD kinase family. A divalent metal cation is required as a cofactor.

The protein localises to the cytoplasm. It catalyses the reaction NAD(+) + ATP = ADP + NADP(+) + H(+). In terms of biological role, involved in the regulation of the intracellular balance of NAD and NADP, and is a key enzyme in the biosynthesis of NADP. Catalyzes specifically the phosphorylation on 2'-hydroxyl of the adenosine moiety of NAD to yield NADP. In Synechococcus sp. (strain ATCC 27144 / PCC 6301 / SAUG 1402/1) (Anacystis nidulans), this protein is NAD kinase 2.